The following is a 282-amino-acid chain: S-formylglutathione hydrolase (282 aa).

Ala2 is subject to N-acetylalanine. Lys4 carries the post-translational modification N6-succinyllysine. Residues Ser149, Asp226, and His260 each act as charge relay system in the active site.

It belongs to the esterase D family. As to quaternary structure, homodimer.

It is found in the cytoplasm. The protein localises to the cytoplasmic vesicle. It carries out the reaction S-formylglutathione + H2O = formate + glutathione + H(+). Its function is as follows. Serine hydrolase involved in the detoxification of formaldehyde. The protein is S-formylglutathione hydrolase (ESD) of Bos taurus (Bovine).